Here is a 357-residue protein sequence, read N- to C-terminus: Protein pelota homolog (357 aa).

The protein belongs to the eukaryotic release factor 1 family. Pelota subfamily. Monomer. It depends on a divalent metal cation as a cofactor.

It is found in the cytoplasm. Its function is as follows. May function in recognizing stalled ribosomes, interact with stem-loop structures in stalled mRNA molecules, and effect endonucleolytic cleavage of the mRNA. May play a role in the release non-functional ribosomes and degradation of damaged mRNAs. Has endoribonuclease activity. The protein is Protein pelota homolog of Halobacterium salinarum (strain ATCC 29341 / DSM 671 / R1).